The sequence spans 89 residues: Small ribosomal subunit protein uS17 (89 aa).

This sequence belongs to the universal ribosomal protein uS17 family. Part of the 30S ribosomal subunit.

Functionally, one of the primary rRNA binding proteins, it binds specifically to the 5'-end of 16S ribosomal RNA. The protein is Small ribosomal subunit protein uS17 of Xanthomonas axonopodis pv. citri (strain 306).